The chain runs to 352 residues: Phenylalanine--tRNA ligase alpha subunit (352 aa).

A Mg(2+)-binding site is contributed by Glu-258.

This sequence belongs to the class-II aminoacyl-tRNA synthetase family. Phe-tRNA synthetase alpha subunit type 1 subfamily. As to quaternary structure, tetramer of two alpha and two beta subunits. Requires Mg(2+) as cofactor.

It localises to the cytoplasm. It carries out the reaction tRNA(Phe) + L-phenylalanine + ATP = L-phenylalanyl-tRNA(Phe) + AMP + diphosphate + H(+). In Staphylococcus carnosus (strain TM300), this protein is Phenylalanine--tRNA ligase alpha subunit.